We begin with the raw amino-acid sequence, 394 residues long: Trans-enoyl reductase fumoC (394 aa).

Residue 62–65 (VDGK) coordinates NADP(+). 152-159 (ASLASVGM) contacts substrate. Residues 224-227 (SSSS), Y242, and 289-290 (LD) contribute to the NADP(+) site. 309-313 (TLTQF) contributes to the substrate binding site. An NADP(+)-binding site is contributed by 378 to 379 (VK).

Belongs to the zinc-containing alcohol dehydrogenase family. As to quaternary structure, monomer.

The protein operates within secondary metabolite biosynthesis. In terms of biological role, trans-enoyl reductase; part of the gene cluster that mediates the biosynthesis of fumosorinone, a 2-pyridone alkaloid that acts as an inhibitor of protein tyrosine phosphatase 1B which is implicated asa negative regulator of insulin receptor signaling and a potential drug target for the treatment of type II diabetes and other associated metabolic syndromes. The polyketide-amino acid backbone of fumosorinone is first assembled by the PKS-NRPS hybrid fumoS. The PKS modules condense one acetyl-CoA starter unit with 7 malonyl-CoA units, programmed C-methylations occurring after the first 3 and the sixth extensions, and cycles of full reduction occurring after the first 2 extensions. Because fumoS lacks a designated enoyl reductase (ER) domain, the required activity is provided the enoyl reductase fumoC. Upon formation of the polyketide backbone on the thiotemplate, the polyketide is transferred to the NRPS module and linked to tyrosine to produce the acyltetramic acid intermediate called prefumosorinone A. The cytochrome P450 monooxygenase fumoA then probably catalyzes an unprecedented oxidative ring expansion of prefumosorinone A to form prefumosorinone B which contains the 2-pyridone core of fumosorinone. The cytochrome P450 monooxygenase fumoB might hydroxylate the nitrogen of prefumosorinone B, but not the acyltetramic acid prefumosorinone A, to form fumosorinone. The polypeptide is Trans-enoyl reductase fumoC (Cordyceps fumosorosea (strain ARSEF 2679) (Isaria fumosorosea)).